A 142-amino-acid chain; its full sequence is Large ribosomal subunit protein uL13 (142 aa).

Belongs to the universal ribosomal protein uL13 family. As to quaternary structure, part of the 50S ribosomal subunit.

Its function is as follows. This protein is one of the early assembly proteins of the 50S ribosomal subunit, although it is not seen to bind rRNA by itself. It is important during the early stages of 50S assembly. In Chromohalobacter salexigens (strain ATCC BAA-138 / DSM 3043 / CIP 106854 / NCIMB 13768 / 1H11), this protein is Large ribosomal subunit protein uL13.